Consider the following 203-residue polypeptide: Auxin-responsive protein IAA4 (203 aa).

Residues 1–31 form a disordered region; the sequence is MEECKGGGMSPSSSMDSSTHPALSTTSSAAT. Over residues 10–31 the composition is skewed to low complexity; the sequence is SPSSSMDSSTHPALSTTSSAAT. The EAR-like (transcriptional repression) motif lies at 40–44; that stretch reads LRLGL. A PB1 domain is found at 108 to 202; that stretch reads TLFVKVYMEG…KKLRIARMDK (95 aa).

This sequence belongs to the Aux/IAA family. In terms of assembly, homodimers and heterodimers.

The protein localises to the nucleus. In terms of biological role, aux/IAA proteins are short-lived transcriptional factors that function as repressors of early auxin response genes at low auxin concentrations. The chain is Auxin-responsive protein IAA4 (IAA4) from Oryza sativa subsp. japonica (Rice).